The sequence spans 178 residues: Ribosome maturation factor RimM (178 aa).

In terms of domain architecture, PRC barrel spans 101–178 (DGEYYWYQLQ…EMQVDWDADF (78 aa)).

The protein belongs to the RimM family. In terms of assembly, binds ribosomal protein uS19.

Its subcellular location is the cytoplasm. Functionally, an accessory protein needed during the final step in the assembly of 30S ribosomal subunit, possibly for assembly of the head region. Essential for efficient processing of 16S rRNA. May be needed both before and after RbfA during the maturation of 16S rRNA. It has affinity for free ribosomal 30S subunits but not for 70S ribosomes. The protein is Ribosome maturation factor RimM of Stutzerimonas stutzeri (strain A1501) (Pseudomonas stutzeri).